A 711-amino-acid polypeptide reads, in one-letter code: Denticleless protein homolog B (711 aa).

3 WD repeats span residues 47 to 89 (GRAV…MQRL), 96 to 135 (AHTN…LIGE), and 138 to 178 (GHQC…KDGF). A DDB1-binding motif motif is present at residues 168–171 (WDTR). A Nuclear localization signal motif is present at residues 197 to 204 (PSKVKKRK). WD repeat units follow at residues 215-254 (DSQQ…STYR), 270-309 (TRKL…TDPV), 314-355 (GHQN…AAPI), and 359-398 (GHCQ…SEDS). Residues 244–247 (WDLR) carry the DDB1-binding motif motif. Disordered regions lie at residues 473 to 524 (QTPK…AFTP) and 601 to 698 (EFDQ…TPGS). Polar residues-rich tracts occupy residues 504 to 516 (TPKS…SKTP) and 606 to 627 (LSPS…TLSP). The segment covering 631 to 642 (MKSDFVDKENSS) has biased composition (basic and acidic residues). Over residues 658–675 (DNSSPQFKSSSSPSSRNS) the composition is skewed to low complexity. Residues 684-697 (NAPNSPVSVPTTPG) show a composition bias toward polar residues.

Belongs to the WD repeat cdt2 family. In terms of assembly, component of the DCX(DTL) E3 ubiquitin ligase complex, at least composed of cul4 (cul4a or cul4b), ddb1, dtl/cdt2 and rbx1.

It localises to the nucleus. Its subcellular location is the cytoplasm. The protein localises to the cytoskeleton. It is found in the microtubule organizing center. The protein resides in the centrosome. It localises to the chromosome. The protein operates within protein modification; protein ubiquitination. Its function is as follows. Substrate-specific adapter of a DCX (DDB1-CUL4-X-box) E3 ubiquitin-protein ligase complex required for cell cycle control, DNA damage response and translesion DNA synthesis. The DCX(DTL) complex, also named CRL4(CDT2) complex, mediates the polyubiquitination and subsequent degradation of CDT1, CDKN1A/p21(CIP1), KMT5A and SDE2. CDT1 degradation in response to DNA damage is necessary to ensure proper cell cycle regulation of DNA replication. CDKN1A/p21(CIP1) degradation during S phase or following UV irradiation is essential to control replication licensing. KMT5A degradation is also important for a proper regulation of mechanisms such as TGF-beta signaling, cell cycle progression, DNA repair and cell migration. Most substrates require their interaction with PCNA for their polyubiquitination: substrates interact with PCNA via their PIP-box, and those containing the 'K+4' motif in the PIP box, recruit the DCX(DTL) complex, leading to their degradation. In undamaged proliferating cells, the DCX(DTL) complex also promotes the 'Lys-164' monoubiquitination of PCNA, thereby being involved in PCNA-dependent translesion DNA synthesis. May play a role in the regulation of the circadian clock. This chain is Denticleless protein homolog B (dtl-b), found in Xenopus laevis (African clawed frog).